We begin with the raw amino-acid sequence, 72 residues long: Large ribosomal subunit protein bL31 (72 aa).

The Zn(2+) site is built by Cys16, Cys18, Cys38, and Cys41.

The protein belongs to the bacterial ribosomal protein bL31 family. Type A subfamily. In terms of assembly, part of the 50S ribosomal subunit. The cofactor is Zn(2+).

Functionally, binds the 23S rRNA. This chain is Large ribosomal subunit protein bL31, found in Aliivibrio fischeri (strain ATCC 700601 / ES114) (Vibrio fischeri).